The primary structure comprises 261 residues: 14-3-3-like protein GF14-12 (261 aa).

It belongs to the 14-3-3 family.

Its function is as follows. Is associated with a DNA binding complex to bind to the G box, a well-characterized cis-acting DNA regulatory element found in plant genes. The protein is 14-3-3-like protein GF14-12 (GRF2) of Zea mays (Maize).